The sequence spans 153 residues: Histone H2B.4 (153 aa).

2 stretches are compositionally biased toward basic and acidic residues: residues 1–28 and 36–53; these read MAPK…EKAP and EKRL…EGKK. The tract at residues 1–61 is disordered; the sequence is MAPKAEKKPA…KKAGRKKAKK (61 aa). An N6-acetyllysine mark is found at lysine 7 and lysine 37. A Glycyl lysine isopeptide (Lys-Gly) (interchain with G-Cter in ubiquitin) cross-link involves residue lysine 149.

It belongs to the histone H2B family. As to quaternary structure, the nucleosome is a histone octamer containing two molecules each of H2A, H2B, H3 and H4 assembled in one H3-H4 heterotetramer and two H2A-H2B heterodimers. The octamer wraps approximately 147 bp of DNA. Can be acetylated to form H2BK6ac and H2BK33ac. In terms of processing, monoubiquitinated by BRE1 to form H2BK143ub1 and deubiquitinated by UBP26. Required for heterochromatic histone H3 di- and trimethylation at H3K4me. May give a specific tag for epigenetic transcriptional activation.

The protein localises to the nucleus. Its subcellular location is the chromosome. Its function is as follows. Core component of nucleosome. Nucleosomes wrap and compact DNA into chromatin, limiting DNA accessibility to the cellular machineries which require DNA as a template. Histones thereby play a central role in transcription regulation, DNA repair, DNA replication and chromosomal stability. DNA accessibility is regulated via a complex set of post-translational modifications of histones, also called histone code, and nucleosome remodeling. The protein is Histone H2B.4 (H2B.4) of Oryza sativa subsp. indica (Rice).